The chain runs to 1370 residues: DNA-directed RNA polymerase subunit beta (1370 aa).

The protein belongs to the RNA polymerase beta chain family. In terms of assembly, the RNAP catalytic core consists of 2 alpha, 1 beta, 1 beta' and 1 omega subunit. When a sigma factor is associated with the core the holoenzyme is formed, which can initiate transcription.

The catalysed reaction is RNA(n) + a ribonucleoside 5'-triphosphate = RNA(n+1) + diphosphate. Its function is as follows. DNA-dependent RNA polymerase catalyzes the transcription of DNA into RNA using the four ribonucleoside triphosphates as substrates. In Geobacter sulfurreducens (strain ATCC 51573 / DSM 12127 / PCA), this protein is DNA-directed RNA polymerase subunit beta.